Here is a 347-residue protein sequence, read N- to C-terminus: Peptidoglycan recognition protein 3 (347 aa).

Positions 1-26 are cleaved as a signal peptide; that stretch reads MLVSWDHPKMLPRLLGFLALSLLACG. N-acetylmuramoyl-L-alanine amidase domains are found at residues 77–185 and 206–328; these read LQSQ…KACP and PAKF…VSNI. N-linked (GlcNAc...) asparagine glycosylation occurs at Asn120. 3 disulfide bridges follow: Cys184–Cys306, Cys200–Cys244, and Cys220–Cys226. Residues His237 and Tyr248 each contribute to the peptidoglycan site. An interaction with murein region spans residues 270-275; the sequence is HTYGYN.

It belongs to the N-acetylmuramoyl-L-alanine amidase 2 family. In terms of assembly, monomer. Homodimer; disulfide-linked. Heterodimer with PGLYRP4; disulfide-linked. As to expression, detected in lung, spleen and stomach, and at low levels in eye, heart, thymus and testis.

It localises to the secreted. In terms of biological role, pattern receptor that binds to murein peptidoglycans (PGN) of Gram-positive bacteria. Has bactericidal activity towards Gram-positive bacteria. May kill Gram-positive bacteria by interfering with peptidoglycan biosynthesis. Also binds to Gram-negative bacteria, and has bacteriostatic activity towards Gram-negative bacteria. Plays a role in innate immunity. The chain is Peptidoglycan recognition protein 3 (Pglyrp3) from Mus musculus (Mouse).